The following is an 84-amino-acid chain: Small ribosomal subunit protein uS17 (84 aa).

This sequence belongs to the universal ribosomal protein uS17 family. In terms of assembly, part of the 30S ribosomal subunit.

In terms of biological role, one of the primary rRNA binding proteins, it binds specifically to the 5'-end of 16S ribosomal RNA. This Nitrosomonas europaea (strain ATCC 19718 / CIP 103999 / KCTC 2705 / NBRC 14298) protein is Small ribosomal subunit protein uS17.